A 357-amino-acid chain; its full sequence is Neutral protease 2 homolog BDCG_00922 (357 aa).

Residues 1–19 (MRSPQSILAIVAFATTAIA) form the signal peptide. A propeptide spanning residues 20-182 (GVVPSTEKRA…FASLNQFSKR (163 aa)) is cleaved from the precursor. 3 disulfide bridges follow: Cys188/Cys259, Cys266/Cys284, and Cys297/Cys357. A Zn(2+)-binding site is contributed by His308. Glu309 is an active-site residue. The Zn(2+) site is built by His312 and Asp323.

This sequence belongs to the peptidase M35 family. Zn(2+) is required as a cofactor.

The protein localises to the secreted. It catalyses the reaction Preferential cleavage of bonds with hydrophobic residues in P1'. Also 3-Asn-|-Gln-4 and 8-Gly-|-Ser-9 bonds in insulin B chain.. In terms of biological role, secreted metalloproteinase that allows assimilation of proteinaceous substrates. Shows high activities on basic nuclear substrates such as histone and protamine. This chain is Neutral protease 2 homolog BDCG_00922, found in Ajellomyces dermatitidis (strain ER-3 / ATCC MYA-2586) (Blastomyces dermatitidis).